We begin with the raw amino-acid sequence, 152 residues long: Superoxide dismutase [Cu-Zn] (152 aa).

His45, His47, and His62 together coordinate Cu cation. A disordered region spans residues 61 to 87 (PHFNPAGKEHGAPEDENRHAGDLGNAT). 4 residues coordinate Zn(2+): His62, His70, His79, and Asp82. Residues 67–81 (GKEHGAPEDENRHAG) show a composition bias toward basic and acidic residues. A Cu cation-binding site is contributed by His119.

The protein belongs to the Cu-Zn superoxide dismutase family. Homodimer. Requires Cu cation as cofactor. It depends on Zn(2+) as a cofactor.

The protein localises to the cytoplasm. It carries out the reaction 2 superoxide + 2 H(+) = H2O2 + O2. In terms of biological role, destroys radicals which are normally produced within the cells and which are toxic to biological systems. This Zingiber officinale (Ginger) protein is Superoxide dismutase [Cu-Zn].